A 999-amino-acid chain; its full sequence is Translation initiation factor IF-2 (999 aa).

The interval 50-407 (AFVNNTGSPA…RGQGQTVRLS (358 aa)) is disordered. 2 stretches are compositionally biased toward pro residues: residues 60–89 (PAAP…PPGG) and 96–121 (PMPP…PPQS). Residues 136-162 (VAAAEARAAALKAEQEAAVKAAQAARQ) show a composition bias toward low complexity. A compositionally biased stretch (basic and acidic residues) spans 163–173 (QQRDNVRREPP). Over residues 179 to 194 (RPGPRPGPGAMPPRPG) the composition is skewed to pro residues. The segment covering 213–222 (GGRPPARGAG) has biased composition (low complexity). Residues 244 to 266 (RPSPASMPPRPSPASMPPRPSPA) are compositionally biased toward pro residues. A compositionally biased stretch (gly residues) spans 275–367 (RPGGPGSGRP…GAAGAFGRPG (93 aa)). The segment covering 371 to 380 (TRGRKSKKQR) has biased composition (basic residues). A compositionally biased stretch (polar residues) spans 388–405 (SAPTMSSGAPRGQGQTVR). The region spanning 490–662 (SRPPVVTVMG…VLLTADASLE (173 aa)) is the tr-type G domain. Residues 499–506 (GHVDHGKT) form a G1 region. 499–506 (GHVDHGKT) contributes to the GTP binding site. The segment at 524 to 528 (GITQH) is G2. The tract at residues 549-552 (DTPG) is G3. Residues 549 to 553 (DTPGH) and 603 to 606 (NKID) contribute to the GTP site. The G4 stretch occupies residues 603–606 (NKID). A G5 region spans residues 639-641 (AAK).

The protein belongs to the TRAFAC class translation factor GTPase superfamily. Classic translation factor GTPase family. IF-2 subfamily.

Its subcellular location is the cytoplasm. In terms of biological role, one of the essential components for the initiation of protein synthesis. Protects formylmethionyl-tRNA from spontaneous hydrolysis and promotes its binding to the 30S ribosomal subunits. Also involved in the hydrolysis of GTP during the formation of the 70S ribosomal complex. The polypeptide is Translation initiation factor IF-2 (Salinispora tropica (strain ATCC BAA-916 / DSM 44818 / JCM 13857 / NBRC 105044 / CNB-440)).